Reading from the N-terminus, the 518-residue chain is Glucose-1-phosphate adenylyltransferase large subunit 2, cytosolic (518 aa).

Belongs to the bacterial/plant glucose-1-phosphate adenylyltransferase family. Heterotetramer composed of two small and two large subunits.

The protein localises to the cytoplasm. The protein resides in the cytosol. It catalyses the reaction alpha-D-glucose 1-phosphate + ATP + H(+) = ADP-alpha-D-glucose + diphosphate. It participates in glycan biosynthesis; starch biosynthesis. Its activity is regulated as follows. Activated by 3'phosphoglycerate, inhibited by orthophosphate. Allosteric regulation. Inhibited by inorganic phosphate (Pi). In terms of biological role, involved in synthesis of starch. Catalyzes the synthesis of ADP-glucose, a molecule that serves as an activated glycosyl donor for alpha-1,4-glucan synthesis. Essential for starch synthesis in seed endosperm. Is essential for both catalytic and allosteric regulatory properties of the cytosolic heterotetramer enzyme. In Oryza sativa subsp. japonica (Rice), this protein is Glucose-1-phosphate adenylyltransferase large subunit 2, cytosolic.